The sequence spans 59 residues: Large ribosomal subunit protein bL32 (59 aa).

A compositionally biased stretch (basic residues) spans 1–15 (MAVPKKKTSKSKRDM). A disordered region spans residues 1-26 (MAVPKKKTSKSKRDMRRATWNRKAAA).

Belongs to the bacterial ribosomal protein bL32 family.

The polypeptide is Large ribosomal subunit protein bL32 (Cyanothece sp. (strain PCC 7425 / ATCC 29141)).